Reading from the N-terminus, the 148-residue chain is UPF0260 protein YE2365 (148 aa).

Belongs to the UPF0260 family.

In Yersinia enterocolitica serotype O:8 / biotype 1B (strain NCTC 13174 / 8081), this protein is UPF0260 protein YE2365.